The chain runs to 285 residues: Probable endonuclease 4 (285 aa).

9 residues coordinate Zn(2+): His69, His109, Glu145, Asp179, His182, His216, Asp229, His231, and Glu261.

It belongs to the AP endonuclease 2 family. Zn(2+) is required as a cofactor.

The enzyme catalyses Endonucleolytic cleavage to 5'-phosphooligonucleotide end-products.. In terms of biological role, endonuclease IV plays a role in DNA repair. It cleaves phosphodiester bonds at apurinic or apyrimidinic (AP) sites, generating a 3'-hydroxyl group and a 5'-terminal sugar phosphate. The sequence is that of Probable endonuclease 4 from Escherichia coli (strain SMS-3-5 / SECEC).